We begin with the raw amino-acid sequence, 55 residues long: Conotoxin Cal6.40 (55 aa).

An N-terminal signal peptide occupies residues 1-21; that stretch reads MSGSGVLLLTLLLLVPLSALA. Intrachain disulfides connect C24–C36, C29–C41, and C35–C50.

Expressed by the venom duct.

It is found in the secreted. Probable neurotoxin. The sequence is that of Conotoxin Cal6.40 from Californiconus californicus (California cone).